A 148-amino-acid polypeptide reads, in one-letter code: MRAVLQRVTRATCTVEGRVTGATGPGLLILLGVAPEDTPETAWRLAAKIVKLRVFADETGRMNRSVQDIGGGILSISQFTLYADTRRGNRPGFSGAAAPEHARALYAEFNAALRAQGVAVGEGVFGAHMMLDLTNDGPVTLFLDTAES.

The short motif at 137–138 is the Gly-cisPro motif, important for rejection of L-amino acids element; the sequence is GP.

The protein belongs to the DTD family. As to quaternary structure, homodimer.

The protein resides in the cytoplasm. The enzyme catalyses glycyl-tRNA(Ala) + H2O = tRNA(Ala) + glycine + H(+). It carries out the reaction a D-aminoacyl-tRNA + H2O = a tRNA + a D-alpha-amino acid + H(+). An aminoacyl-tRNA editing enzyme that deacylates mischarged D-aminoacyl-tRNAs. Also deacylates mischarged glycyl-tRNA(Ala), protecting cells against glycine mischarging by AlaRS. Acts via tRNA-based rather than protein-based catalysis; rejects L-amino acids rather than detecting D-amino acids in the active site. By recycling D-aminoacyl-tRNA to D-amino acids and free tRNA molecules, this enzyme counteracts the toxicity associated with the formation of D-aminoacyl-tRNA entities in vivo and helps enforce protein L-homochirality. This chain is D-aminoacyl-tRNA deacylase, found in Deinococcus geothermalis (strain DSM 11300 / CIP 105573 / AG-3a).